A 386-amino-acid polypeptide reads, in one-letter code: tRNA N6-adenosine threonylcarbamoyltransferase (386 aa).

Residues H112 and H116 each coordinate Fe cation. Substrate-binding positions include 134-138 (LASGG), D167, G180, and N322. D350 provides a ligand contact to Fe cation.

It belongs to the KAE1 / TsaD family. Requires Fe(2+) as cofactor.

It localises to the cytoplasm. It carries out the reaction L-threonylcarbamoyladenylate + adenosine(37) in tRNA = N(6)-L-threonylcarbamoyladenosine(37) in tRNA + AMP + H(+). Required for the formation of a threonylcarbamoyl group on adenosine at position 37 (t(6)A37) in tRNAs that read codons beginning with adenine. Is involved in the transfer of the threonylcarbamoyl moiety of threonylcarbamoyl-AMP (TC-AMP) to the N6 group of A37, together with TsaE and TsaB. TsaD likely plays a direct catalytic role in this reaction. This is tRNA N6-adenosine threonylcarbamoyltransferase from Rickettsia akari (strain Hartford).